We begin with the raw amino-acid sequence, 270 residues long: Allergen Asp f 7 (270 aa).

The N-terminal stretch at 1–21 (MAPIFKSLALVSALFAAISSA) is a signal peptide. Disordered stretches follow at residues 53–97 (YPTP…QPTQ) and 113–167 (ADSA…GPCS). Low complexity predominate over residues 63–81 (VVESTPTPTPSAAPEQAEP). Polar residues predominate over residues 83–97 (ETSTQPETTKSQPTQ). Positions 127-149 (PATTAAPSTSTTTQAAPSAPPAA) are enriched in low complexity. Residues 150–162 (NSGSTEKAASSGY) show a composition bias toward polar residues.

In Aspergillus fumigatus (strain ATCC MYA-4609 / CBS 101355 / FGSC A1100 / Af293) (Neosartorya fumigata), this protein is Allergen Asp f 7.